The sequence spans 380 residues: MAPNPRKSHPLLKMINNSLIDLPAPSNISAWWNFGSLLALCLMTQILTGLLLAMHYTADTTLAFSSVAHTCRDVQYGWLIRNMHANGASFFFICIYLHIGRGFYYGSYLHKETWNTGVLLLLTLMATAFVGYVLPWGQMSFWGATVITNMFSAIPYIGQTIVEWAWGGFSVDNPTLTRFFALHFLLPFMIAGLTLIHLTFLHESGSNNPLGIVSNCDKIPFHPYYSLKDALGLALLLLPLTTMALFSPNLLGDPENFTPANPLVTPPHIKPEWYFLFAYAILRSIPNKLGGVLALAASVLVLFLSPLLHKSKQRTMAFRPLSQLLFWTLVANLLILTWIGSQPVEHPFIIIGQLASTTYFIILLILFPITSALENKMLNF.

A run of 4 helical transmembrane segments spans residues 34 to 54 (FGSLLALCLMTQILTGLLLAM), 78 to 99 (WLIRNMHANGASFFFICIYLHI), 114 to 134 (WNTGVLLLLTLMATAFVGYVL), and 179 to 199 (FFALHFLLPFMIAGLTLIHLT). Heme b-binding residues include H84 and H98. Heme b-binding residues include H183 and H197. H202 provides a ligand contact to a ubiquinone. The next 4 membrane-spanning stretches (helical) occupy residues 227-247 (LKDALGLALLLLPLTTMALFS), 289-309 (LGGVLALAASVLVLFLSPLLH), 321-341 (LSQLLFWTLVANLLILTWIGS), and 348-368 (FIIIGQLASTTYFIILLILFP).

Belongs to the cytochrome b family. In terms of assembly, the cytochrome bc1 complex contains 11 subunits: 3 respiratory subunits (MT-CYB, CYC1 and UQCRFS1), 2 core proteins (UQCRC1 and UQCRC2) and 6 low-molecular weight proteins (UQCRH/QCR6, UQCRB/QCR7, UQCRQ/QCR8, UQCR10/QCR9, UQCR11/QCR10 and a cleavage product of UQCRFS1). This cytochrome bc1 complex then forms a dimer. The cofactor is heme b.

The protein resides in the mitochondrion inner membrane. Component of the ubiquinol-cytochrome c reductase complex (complex III or cytochrome b-c1 complex) that is part of the mitochondrial respiratory chain. The b-c1 complex mediates electron transfer from ubiquinol to cytochrome c. Contributes to the generation of a proton gradient across the mitochondrial membrane that is then used for ATP synthesis. This Oceanodroma tethys (Wedge-rumped storm-petrel) protein is Cytochrome b (MT-CYB).